Consider the following 427-residue polypeptide: Bifunctional enzyme MtnB/MtnX (427 aa).

An HK-MTPenyl-1-P phosphatase region spans residues 1–221 (MRKPLIICDF…LEETAEVKEW (221 aa)). The interval 222–427 (MSEQKRQELA…KLKALQAYHV (206 aa)) is MTRu-1-P dehydratase. Positions 317 and 319 each coordinate Zn(2+).

This sequence in the N-terminal section; belongs to the HAD-like hydrolase superfamily. MtnX family. The protein in the C-terminal section; belongs to the aldolase class II family. MtnB subfamily. Homotetramer. It depends on Zn(2+) as a cofactor.

It catalyses the reaction 5-(methylsulfanyl)-D-ribulose 1-phosphate = 5-methylsulfanyl-2,3-dioxopentyl phosphate + H2O. The catalysed reaction is 2-hydroxy-5-methylsulfanyl-3-oxopent-1-enyl phosphate + H2O = 1,2-dihydroxy-5-(methylsulfanyl)pent-1-en-3-one + phosphate. The protein operates within amino-acid biosynthesis; L-methionine biosynthesis via salvage pathway; L-methionine from S-methyl-5-thio-alpha-D-ribose 1-phosphate: step 2/6. Its pathway is amino-acid biosynthesis; L-methionine biosynthesis via salvage pathway; L-methionine from S-methyl-5-thio-alpha-D-ribose 1-phosphate: step 4/6. Its function is as follows. Catalyzes the dehydration of methylthioribulose-1-phosphate (MTRu-1-P) into 2,3-diketo-5-methylthiopentyl-1-phosphate (DK-MTP-1-P). In terms of biological role, dephosphorylates 2-hydroxy-3-keto-5-methylthiopentenyl-1-phosphate (HK-MTPenyl-1-P) yielding 1,2-dihydroxy-3-keto-5-methylthiopentene (DHK-MTPene). This Bacillus licheniformis (strain ATCC 14580 / DSM 13 / JCM 2505 / CCUG 7422 / NBRC 12200 / NCIMB 9375 / NCTC 10341 / NRRL NRS-1264 / Gibson 46) protein is Bifunctional enzyme MtnB/MtnX (mtnB/mtnX).